A 688-amino-acid polypeptide reads, in one-letter code: Elongation factor G (688 aa).

Positions 8–282 constitute a tr-type G domain; it reads EKFRNFGIMA…GVVDYLPSPL (275 aa). Residues 17 to 24, 81 to 85, and 135 to 138 each bind GTP; these read AHIDAGKT, DTPGH, and NKMD.

This sequence belongs to the TRAFAC class translation factor GTPase superfamily. Classic translation factor GTPase family. EF-G/EF-2 subfamily.

It localises to the cytoplasm. Catalyzes the GTP-dependent ribosomal translocation step during translation elongation. During this step, the ribosome changes from the pre-translocational (PRE) to the post-translocational (POST) state as the newly formed A-site-bound peptidyl-tRNA and P-site-bound deacylated tRNA move to the P and E sites, respectively. Catalyzes the coordinated movement of the two tRNA molecules, the mRNA and conformational changes in the ribosome. The sequence is that of Elongation factor G from Clostridium perfringens (strain ATCC 13124 / DSM 756 / JCM 1290 / NCIMB 6125 / NCTC 8237 / Type A).